The following is a 418-amino-acid chain: Thyroid hormone receptor alpha-B (418 aa).

The disordered stretch occupies residues 1–40 (MDQNLSGLDCLSEPDEKRWPDGKRKRKNSQCMGKSGMSGD). Positions 1-60 (MDQNLSGLDCLSEPDEKRWPDGKRKRKNSQCMGKSGMSGDSLVSLPPAGYIPSYLDKDEP) are modulating. 2 consecutive NR C4-type zinc fingers follow at residues 61–81 (CVVC…CEGC) and 99–123 (CKYD…FKKC). Positions 61 to 128 (CVVCSDKATG…RFKKCIAVGM (68 aa)) form a DNA-binding region, nuclear receptor. Residues 171 to 415 (EEWELIRIVT…PPLFLEVFED (245 aa)) enclose the NR LBD domain.

This sequence belongs to the nuclear hormone receptor family. NR1 subfamily. In terms of assembly, binds to thyroid hormone receptor element (TRE) weakly as homodimers and monomers, but binds TRE with much higher affinity as heterodimers with retinoid X receptors. Can bind DNA as a heterodimer with either rxra or rxrg.

The protein localises to the nucleus. Functionally, high affinity receptor for triiodothyronine (T3). The polypeptide is Thyroid hormone receptor alpha-B (thra-b) (Xenopus laevis (African clawed frog)).